The sequence spans 396 residues: Small ribosomal subunit protein mS27 (396 aa).

It belongs to the mitochondrion-specific ribosomal protein mS27 family. As to quaternary structure, component of the mitochondrial small ribosomal subunit (mt-SSU). Mature N.crassa 74S mitochondrial ribosomes consist of a small (37S) and a large (54S) subunit. The 37S small subunit contains a 16S ribosomal RNA (16S mt-rRNA) and 32 different proteins. The 54S large subunit contains a 23S rRNA (23S mt-rRNA) and 42 different proteins.

The protein resides in the mitochondrion. Component of the mitochondrial ribosome (mitoribosome), a dedicated translation machinery responsible for the synthesis of mitochondrial genome-encoded proteins, including at least some of the essential transmembrane subunits of the mitochondrial respiratory chain. The mitoribosomes are attached to the mitochondrial inner membrane and translation products are cotranslationally integrated into the membrane. This Neurospora crassa (strain ATCC 24698 / 74-OR23-1A / CBS 708.71 / DSM 1257 / FGSC 987) protein is Small ribosomal subunit protein mS27 (mrp13).